The primary structure comprises 89 residues: Small ribosomal subunit protein uS15 (89 aa).

Belongs to the universal ribosomal protein uS15 family. As to quaternary structure, part of the 30S ribosomal subunit. Forms a bridge to the 50S subunit in the 70S ribosome, contacting the 23S rRNA.

One of the primary rRNA binding proteins, it binds directly to 16S rRNA where it helps nucleate assembly of the platform of the 30S subunit by binding and bridging several RNA helices of the 16S rRNA. Its function is as follows. Forms an intersubunit bridge (bridge B4) with the 23S rRNA of the 50S subunit in the ribosome. The sequence is that of Small ribosomal subunit protein uS15 from Escherichia coli O139:H28 (strain E24377A / ETEC).